The following is a 411-amino-acid chain: Metal-binding regulatory protein cuf1 (411 aa).

The segment at residues 1 to 40 (MVVINNVKMACMKCIRGHRSSTCKHNDRELFPIRPKGRPI) is a DNA-binding region (copper-fist). Positions 11, 14, 23, and 25 each coordinate Zn(2+). The tract at residues 63–92 (SRKKGSKCSTSSTTDLDSSSASNSSCSIPS) is disordered. A compositionally biased stretch (low complexity) spans 69-92 (KCSTSSTTDLDSSSASNSSCSIPS).

The protein localises to the cytoplasm. It is found in the nucleus. Copper-sensing transcription factor that regulates iron uptake genes. Under copper starvation conditions activates the transcription of the copper transport genes, ctr4, ctr5 and ctr6. The protein is Metal-binding regulatory protein cuf1 (cuf1) of Schizosaccharomyces pombe (strain 972 / ATCC 24843) (Fission yeast).